Reading from the N-terminus, the 101-residue chain is Large ribosomal subunit protein uL24 (101 aa).

Belongs to the universal ribosomal protein uL24 family. As to quaternary structure, part of the 50S ribosomal subunit.

Functionally, one of two assembly initiator proteins, it binds directly to the 5'-end of the 23S rRNA, where it nucleates assembly of the 50S subunit. In terms of biological role, one of the proteins that surrounds the polypeptide exit tunnel on the outside of the subunit. The protein is Large ribosomal subunit protein uL24 of Ruegeria sp. (strain TM1040) (Silicibacter sp.).